The chain runs to 732 residues: Copper-transporting ATPase (732 aa).

Over 1–88 (MTKAQFYIEG…NPSFLTPNVK (88 aa)) the chain is Cytoplasmic. The 67-residue stretch at 2–68 (TKAQFYIEGM…QIEKLGYQPR (67 aa)) folds into the HMA domain. Cu(+)-binding residues include Cys13 and Cys16. A helical transmembrane segment spans residues 89–109 (LALVLLGTLGVLALSMFAPLL). Residues 110–122 (PLPSFLKNPFING) are Extracellular-facing. Residues 123–142 (IVQLVLSLMVMHMGRNFYVH) form a helical membrane-spanning segment. Residues 143-149 (GFKALWA) lie on the Cytoplasmic side of the membrane. A helical transmembrane segment spans residues 150–170 (RQPNMDSLIALGTSAALLYSL). The Extracellular segment spans residues 171–187 (VLLFRAYTHAPIEGYYF). A helical membrane pass occupies residues 188–208 (ESVCVILLFVMAGKRVEENSK). At 209 to 336 (DKALEAMQSL…KAPIARLADK (128 aa)) the chain is on the cytoplasmic side. The chain crosses the membrane as a helical span at residues 337–359 (VAGVFVPIVIGIASIAFLVWLVL). Residues 360 to 365 (GDFTRA) lie on the Extracellular side of the membrane. Residues 366-383 (LEVFIAILVISCPCALGL) traverse the membrane as a helical segment. Residues 384–663 (ATPMALLVAQ…KLSALTIANI (280 aa)) are Cytoplasmic-facing. Residue Asp421 is the 4-aspartylphosphate intermediate of the active site. Asp609 and Asp613 together coordinate Mg(2+). The chain crosses the membrane as a helical span at residues 664 to 683 (KQNLFWAFCYNSIAIPLACG). Topologically, residues 684–694 (VAYKLGIMFNP) are extracellular. Residues 695–713 (MLASLAMSLSSVSVVLNAQ) form a helical membrane-spanning segment. At 714–732 (RLRGAHFKIRGSHENRHSS) the chain is on the cytoplasmic side.

It belongs to the cation transport ATPase (P-type) (TC 3.A.3) family. Type IB subfamily.

Its subcellular location is the cell membrane. It carries out the reaction Cu(+)(in) + ATP + H2O = Cu(+)(out) + ADP + phosphate + H(+). Functionally, probably involved in copper export. The protein is Copper-transporting ATPase (copA) of Helicobacter felis (strain ATCC 49179 / CCUG 28539 / NCTC 12436 / CS1).